Reading from the N-terminus, the 924-residue chain is Bifunctional glutamine synthetase adenylyltransferase/adenylyl-removing enzyme (924 aa).

The adenylyl removase stretch occupies residues 1-422; sequence MQTKGCRFFM…QFKKLIQEEV (422 aa). The adenylyl transferase stretch occupies residues 424-924; it reads SPDETDTELE…PASTMALESE (501 aa).

The protein belongs to the GlnE family. The cofactor is Mg(2+).

It carries out the reaction [glutamine synthetase]-O(4)-(5'-adenylyl)-L-tyrosine + phosphate = [glutamine synthetase]-L-tyrosine + ADP. The enzyme catalyses [glutamine synthetase]-L-tyrosine + ATP = [glutamine synthetase]-O(4)-(5'-adenylyl)-L-tyrosine + diphosphate. Involved in the regulation of glutamine synthetase GlnA, a key enzyme in the process to assimilate ammonia. When cellular nitrogen levels are high, the C-terminal adenylyl transferase (AT) inactivates GlnA by covalent transfer of an adenylyl group from ATP to specific tyrosine residue of GlnA, thus reducing its activity. Conversely, when nitrogen levels are low, the N-terminal adenylyl removase (AR) activates GlnA by removing the adenylyl group by phosphorolysis, increasing its activity. The regulatory region of GlnE binds the signal transduction protein PII (GlnB) which indicates the nitrogen status of the cell. This Acinetobacter baylyi (strain ATCC 33305 / BD413 / ADP1) protein is Bifunctional glutamine synthetase adenylyltransferase/adenylyl-removing enzyme.